Reading from the N-terminus, the 383-residue chain is Deoxyguanosinetriphosphate triphosphohydrolase-like protein (383 aa).

In terms of domain architecture, HD spans 62-198 (RLTHSLEVST…AALADDISYI (137 aa)).

It belongs to the dGTPase family. Type 2 subfamily.

The chain is Deoxyguanosinetriphosphate triphosphohydrolase-like protein from Rickettsia bellii (strain RML369-C).